A 278-amino-acid polypeptide reads, in one-letter code: Shikimate dehydrogenase (NADP(+)) (278 aa).

Shikimate-binding positions include 15–17 and Thr-62; that span reads SMS. Lys-66 (proton acceptor) is an active-site residue. An NADP(+)-binding site is contributed by Glu-78. Asn-87 and Asp-102 together coordinate shikimate. Residues 127 to 131, 151 to 156, and Ile-217 each bind NADP(+); these read GAGGA and NRTPEK. Residue Tyr-219 coordinates shikimate. Gly-240 lines the NADP(+) pocket.

Belongs to the shikimate dehydrogenase family. In terms of assembly, homodimer.

The catalysed reaction is shikimate + NADP(+) = 3-dehydroshikimate + NADPH + H(+). It participates in metabolic intermediate biosynthesis; chorismate biosynthesis; chorismate from D-erythrose 4-phosphate and phosphoenolpyruvate: step 4/7. Functionally, involved in the biosynthesis of the chorismate, which leads to the biosynthesis of aromatic amino acids. Catalyzes the reversible NADPH linked reduction of 3-dehydroshikimate (DHSA) to yield shikimate (SA). The sequence is that of Shikimate dehydrogenase (NADP(+)) from Bacillus licheniformis (strain ATCC 14580 / DSM 13 / JCM 2505 / CCUG 7422 / NBRC 12200 / NCIMB 9375 / NCTC 10341 / NRRL NRS-1264 / Gibson 46).